The chain runs to 180 residues: N-terminal acetyltransferase B complex catalytic subunit naa20 (180 aa).

Residues 2–156 (TDTRKFKATD…DSFDMRKPLS (155 aa)) enclose the N-acetyltransferase domain.

Belongs to the acetyltransferase family. In terms of assembly, component of the N-terminal acetyltransferase B (NatB) complex.

The protein localises to the cytoplasm. Its subcellular location is the nucleus. The enzyme catalyses N-terminal L-methionyl-L-asparaginyl-[protein] + acetyl-CoA = N-terminal N(alpha)-acetyl-L-methionyl-L-asparaginyl-[protein] + CoA + H(+). It catalyses the reaction N-terminal L-methionyl-L-glutaminyl-[protein] + acetyl-CoA = N-terminal N(alpha)-acetyl-L-methionyl-L-glutaminyl-[protein] + CoA + H(+). It carries out the reaction N-terminal L-methionyl-L-aspartyl-[protein] + acetyl-CoA = N-terminal N(alpha)-acetyl-L-methionyl-L-aspartyl-[protein] + CoA + H(+). The catalysed reaction is N-terminal L-methionyl-L-glutamyl-[protein] + acetyl-CoA = N-terminal N(alpha)-acetyl-L-methionyl-L-glutamyl-[protein] + CoA + H(+). Functionally, catalytic subunit of the NatB N-terminal acetyltransferase, which catalyzes acetylation of the amino-terminal methionine residues of all proteins beginning with Met-Asp or Met-Glu and of some proteins beginning with Met-Asn, Met-Gln or Met-Met. The sequence is that of N-terminal acetyltransferase B complex catalytic subunit naa20 (naa20) from Schizosaccharomyces pombe (strain 972 / ATCC 24843) (Fission yeast).